The sequence spans 88 residues: Co-chaperonin GroES (88 aa).

The protein belongs to the GroES chaperonin family. In terms of assembly, heptamer of 7 subunits arranged in a ring. Interacts with the chaperonin GroEL.

Its subcellular location is the cytoplasm. Its function is as follows. Together with the chaperonin GroEL, plays an essential role in assisting protein folding. The GroEL-GroES system forms a nano-cage that allows encapsulation of the non-native substrate proteins and provides a physical environment optimized to promote and accelerate protein folding. GroES binds to the apical surface of the GroEL ring, thereby capping the opening of the GroEL channel. This Thermodesulfovibrio yellowstonii (strain ATCC 51303 / DSM 11347 / YP87) protein is Co-chaperonin GroES.